Reading from the N-terminus, the 487-residue chain is Glutamyl-tRNA(Gln) amidotransferase subunit A (487 aa).

Residues K75 and S150 each act as charge relay system in the active site. S174 serves as the catalytic Acyl-ester intermediate.

Belongs to the amidase family. GatA subfamily. In terms of assembly, heterotrimer of A, B and C subunits.

It carries out the reaction L-glutamyl-tRNA(Gln) + L-glutamine + ATP + H2O = L-glutaminyl-tRNA(Gln) + L-glutamate + ADP + phosphate + H(+). In terms of biological role, allows the formation of correctly charged Gln-tRNA(Gln) through the transamidation of misacylated Glu-tRNA(Gln) in organisms which lack glutaminyl-tRNA synthetase. The reaction takes place in the presence of glutamine and ATP through an activated gamma-phospho-Glu-tRNA(Gln). This chain is Glutamyl-tRNA(Gln) amidotransferase subunit A, found in Deinococcus deserti (strain DSM 17065 / CIP 109153 / LMG 22923 / VCD115).